The chain runs to 54 residues: uncharacterized protein (54 aa).

The protein to B.subtilis XkdX.

This is an uncharacterized protein from Bacillus subtilis (strain 168).